Reading from the N-terminus, the 157-residue chain is Protein NrdI (157 aa).

This sequence belongs to the NrdI family.

Functionally, probably involved in ribonucleotide reductase function. The sequence is that of Protein NrdI from Mycoplasma mycoides subsp. mycoides SC (strain CCUG 32753 / NCTC 10114 / PG1).